A 406-amino-acid chain; its full sequence is Argininosuccinate synthase (406 aa).

ATP is bound by residues 11–19 and alanine 38; that span reads AYSGGLDTS. L-citrulline contacts are provided by tyrosine 91 and serine 96. Glycine 121 lines the ATP pocket. Residues threonine 123, asparagine 127, and aspartate 128 each contribute to the L-aspartate site. Asparagine 127 lines the L-citrulline pocket. L-citrulline-binding residues include arginine 131, serine 181, serine 190, glutamate 266, and tyrosine 278.

The protein belongs to the argininosuccinate synthase family. Type 1 subfamily. Homotetramer.

Its subcellular location is the cytoplasm. The catalysed reaction is L-citrulline + L-aspartate + ATP = 2-(N(omega)-L-arginino)succinate + AMP + diphosphate + H(+). It functions in the pathway amino-acid biosynthesis; L-arginine biosynthesis; L-arginine from L-ornithine and carbamoyl phosphate: step 2/3. This is Argininosuccinate synthase from Campylobacter jejuni (strain RM1221).